The chain runs to 409 residues: uncharacterized protein (409 aa).

Residues 5-274 (ILIGFVGKPS…LAKQGFVKYE (270 aa)) form the OBG-type G domain. GTP contacts are provided by residues 11-18 (GKPSSGKS) and 83-87 (DVAGL).

Belongs to the TRAFAC class OBG-HflX-like GTPase superfamily. OBG GTPase family.

The protein resides in the cytoplasm. It localises to the nucleus. This is an uncharacterized protein from Schizosaccharomyces pombe (strain 972 / ATCC 24843) (Fission yeast).